The chain runs to 152 residues: Actin-depolymerizing factor 2, isoform c (152 aa).

One can recognise an ADF-H domain in the interval 4–147 (GVKVDPSCKN…DEKSVKSDLM (144 aa)).

It belongs to the actin-binding proteins ADF family.

Functionally, depolymerizes growing actin filaments in muscle cells; required for the assembly of actin filaments into the functional contractile myofilament lattice of muscle. This chain is Actin-depolymerizing factor 2, isoform c, found in Caenorhabditis elegans.